Reading from the N-terminus, the 160-residue chain is Serine-protein kinase RsbW (160 aa).

Belongs to the anti-sigma-factor family.

The catalysed reaction is L-seryl-[protein] + ATP = O-phospho-L-seryl-[protein] + ADP + H(+). It catalyses the reaction L-threonyl-[protein] + ATP = O-phospho-L-threonyl-[protein] + ADP + H(+). Its function is as follows. Negative regulator of sigma-B activity. Phosphorylates and inactivates its specific antagonist protein, RsbV. Upon phosphorylation of RsbV, RsbW is released and binds to sigma-B, thereby blocking its ability to form an RNA polymerase holoenzyme (E-sigma-B). The chain is Serine-protein kinase RsbW from Bacillus thuringiensis (strain Al Hakam).